Consider the following 156-residue polypeptide: Cyanate hydratase (156 aa).

Active-site residues include arginine 96, glutamate 99, and serine 122.

This sequence belongs to the cyanase family.

The enzyme catalyses cyanate + hydrogencarbonate + 3 H(+) = NH4(+) + 2 CO2. Catalyzes the reaction of cyanate with bicarbonate to produce ammonia and carbon dioxide. This is Cyanate hydratase from Pseudomonas paraeruginosa (strain DSM 24068 / PA7) (Pseudomonas aeruginosa (strain PA7)).